Here is a 511-residue protein sequence, read N- to C-terminus: Zinc finger and BTB domain-containing protein 45 (511 aa).

The 64-residue stretch at 33–96 (CDVTVRIREA…LYSGSLVVAQ (64 aa)) folds into the BTB domain. Low complexity predominate over residues 159–168 (ARPPGHPGAA). 2 disordered regions span residues 159 to 241 (ARPP…PDCA) and 294 to 403 (EDGA…PPTY). Acidic residues predominate over residues 206 to 224 (RGDEDDEESDDETDGEDGE). The span at 339–360 (PGPPAPPPSAPSGPAPAPPPAF) shows a compositional bias: pro residues. The span at 378 to 397 (PAPSAAPTTAPSGTPARTPG) shows a compositional bias: low complexity. 4 consecutive C2H2-type zinc fingers follow at residues 403 to 425 (YECSHCRKTFSSRKNYTKHMFIH), 431 to 453 (HQCAVCWRSFSLRDYLLKHMVTH), 459 to 481 (FQCAVCAKRFTQKSSLNVHMRTH), and 486 to 508 (APCPACGKVFSHRALLERHLAAH).

This sequence belongs to the krueppel C2H2-type zinc-finger protein family.

Its subcellular location is the nucleus. May be involved in transcriptional regulation. In the central nervous system, may play a role in glial cell differentiation. The sequence is that of Zinc finger and BTB domain-containing protein 45 (ZBTB45) from Homo sapiens (Human).